Consider the following 419-residue polypeptide: Tyrosine--tRNA ligase (419 aa).

Y34 contacts L-tyrosine. The 'HIGH' region motif lies at 39-48 (PSGDSMHIGH). Y168 and Q172 together coordinate L-tyrosine. A 'KMSKS' region motif is present at residues 230-234 (KFGKS). Residue K233 coordinates ATP. An S4 RNA-binding domain is found at 352–418 (ANLVDWLVTL…GKKKYFLVSY (67 aa)).

This sequence belongs to the class-I aminoacyl-tRNA synthetase family. TyrS type 1 subfamily. In terms of assembly, homodimer.

The protein localises to the cytoplasm. The catalysed reaction is tRNA(Tyr) + L-tyrosine + ATP = L-tyrosyl-tRNA(Tyr) + AMP + diphosphate + H(+). Catalyzes the attachment of tyrosine to tRNA(Tyr) in a two-step reaction: tyrosine is first activated by ATP to form Tyr-AMP and then transferred to the acceptor end of tRNA(Tyr). This is Tyrosine--tRNA ligase from Listeria monocytogenes serotype 4a (strain HCC23).